Here is a 109-residue protein sequence, read N- to C-terminus: MALVRDDFDDIPDSEIHETIVERIEGLGEMFPDALRSAVHSTVDWSIWGVKGVFSLTKSTIWVVSTTSLIAFLPYIIEKERSDLEKTQVAQQRQMLLGPSAAIQQAKTA.

Residues 1 to 60 (MALVRDDFDDIPDSEIHETIVERIEGLGEMFPDALRSAVHSTVDWSIWGVKGVFSLTKST) are Cytoplasmic-facing. Residues 61 to 77 (IWVVSTTSLIAFLPYII) form a helical membrane-spanning segment. Over 78–109 (EKERSDLEKTQVAQQRQMLLGPSAAIQQAKTA) the chain is Mitochondrial intermembrane.

It belongs to the Tom22 family. In terms of assembly, forms part of the preprotein translocase complex of the outer mitochondrial membrane (TOM complex).

Its subcellular location is the mitochondrion outer membrane. Its function is as follows. Central receptor component of the translocase of the outer membrane of mitochondria (TOM complex) responsible for the recognition and translocation of cytosolically synthesized mitochondrial preproteins. Together with the peripheral receptor tomm-20 functions as the transit peptide receptor and facilitates the movement of preproteins into the translocation pore. In Caenorhabditis elegans, this protein is Mitochondrial import receptor subunit TOM22 homolog.